We begin with the raw amino-acid sequence, 180 residues long: ATP synthase subunit delta (180 aa).

It belongs to the ATPase delta chain family. As to quaternary structure, F-type ATPases have 2 components, F(1) - the catalytic core - and F(0) - the membrane proton channel. F(1) has five subunits: alpha(3), beta(3), gamma(1), delta(1), epsilon(1). CF(0) has four main subunits: a(1), b(1), b'(1) and c(10-14). The alpha and beta chains form an alternating ring which encloses part of the gamma chain. F(1) is attached to F(0) by a central stalk formed by the gamma and epsilon chains, while a peripheral stalk is formed by the delta, b and b' chains.

Its subcellular location is the cellular thylakoid membrane. In terms of biological role, f(1)F(0) ATP synthase produces ATP from ADP in the presence of a proton or sodium gradient. F-type ATPases consist of two structural domains, F(1) containing the extramembraneous catalytic core and F(0) containing the membrane proton channel, linked together by a central stalk and a peripheral stalk. During catalysis, ATP synthesis in the catalytic domain of F(1) is coupled via a rotary mechanism of the central stalk subunits to proton translocation. Functionally, this protein is part of the stalk that links CF(0) to CF(1). It either transmits conformational changes from CF(0) to CF(1) or is implicated in proton conduction. The sequence is that of ATP synthase subunit delta from Prochlorococcus marinus (strain MIT 9515).